The sequence spans 205 residues: Thymidylate kinase (205 aa).

Position 10–17 (10–17) interacts with ATP; that stretch reads GIDGAGKS.

This sequence belongs to the thymidylate kinase family.

It carries out the reaction dTMP + ATP = dTDP + ADP. In terms of biological role, phosphorylation of dTMP to form dTDP in both de novo and salvage pathways of dTTP synthesis. In Ralstonia pickettii (strain 12J), this protein is Thymidylate kinase.